A 308-amino-acid chain; its full sequence is Porphobilinogen deaminase (308 aa).

Residue cysteine 242 is modified to S-(dipyrrolylmethanemethyl)cysteine.

This sequence belongs to the HMBS family. In terms of assembly, monomer. Requires dipyrromethane as cofactor.

It catalyses the reaction 4 porphobilinogen + H2O = hydroxymethylbilane + 4 NH4(+). It participates in porphyrin-containing compound metabolism; protoporphyrin-IX biosynthesis; coproporphyrinogen-III from 5-aminolevulinate: step 2/4. Tetrapolymerization of the monopyrrole PBG into the hydroxymethylbilane pre-uroporphyrinogen in several discrete steps. The sequence is that of Porphobilinogen deaminase from Alkalilimnicola ehrlichii (strain ATCC BAA-1101 / DSM 17681 / MLHE-1).